The following is a 56-amino-acid chain: Conotoxin Cal6.41a (56 aa).

Residues 1-23 form the signal peptide; it reads MSGSGAMLLGLLILVAMATSLDT. Cystine bridges form between C27–C41, C33–C50, and C40–C54.

As to expression, expressed by the venom duct.

Its subcellular location is the secreted. Probable neurotoxin. This chain is Conotoxin Cal6.41a, found in Californiconus californicus (California cone).